The sequence spans 1383 residues: NPC intracellular cholesterol transporter 1 homolog 1 (1383 aa).

The first 20 residues, 1–20 (MKQLLIFCLLFGSIFHHGDA), serve as a signal peptide directing secretion. Intrachain disulfides connect Cys-22-Cys-76, Cys-28-Cys-39, Cys-65-Cys-111, Cys-77-Cys-115, Cys-99-Cys-246, Cys-102-Cys-167, Cys-182-Cys-187, and Cys-235-Cys-251. Residue Asn-42 is glycosylated (N-linked (GlcNAc...) asparagine). Asn-231 carries N-linked (GlcNAc...) asparagine glycosylation. 2 consecutive transmembrane segments (helical) span residues 282 to 302 (IFVM…GFVF) and 353 to 373 (PKSH…GMIY). A glycan (N-linked (GlcNAc...) asparagine) is linked at Asn-447. Disulfide bonds link Cys-464-Cys-474 and Cys-526-Cys-541. Residue Asn-558 is glycosylated (N-linked (GlcNAc...) asparagine). A run of 6 helical transmembrane segments spans residues 627–647 (EIVT…FSLG), 665–685 (ICLG…SWGI), 697–717 (ALVV…FMVV), 746–766 (TMPA…IGGF), 780–800 (GLAV…LFVW), and 856–876 (IITG…SSKI). The region spanning 627 to 800 (EIVTVVIALA…CTIFLALFVW (174 aa)) is the SSD domain. 4 disulfides stabilise this stretch: Cys-929–Cys-934, Cys-976–Cys-1046, Cys-977–Cys-1005, and Cys-988–Cys-1002. Asn-993 and Asn-1082 each carry an N-linked (GlcNAc...) asparagine glycan. 5 helical membrane-spanning segments follow: residues 1126–1146 (IMPI…GIIC), 1157–1177 (ACAV…MYIF), 1179–1199 (IPVN…LIEF), 1226–1246 (IGPI…MFLS), and 1260–1280 (LFLI…PILL).

This sequence belongs to the patched family.

The protein resides in the membrane. It carries out the reaction cholesterol(in) = cholesterol(out). Functionally, involved in the uptake or utilization of cholesterol. Ncr-1 and ncr-2 act redundantly to prevent dauer larva formation under favorable growth conditions, and are required for the normal functioning of ADF, ASI and ASG neurons. In Caenorhabditis elegans, this protein is NPC intracellular cholesterol transporter 1 homolog 1.